Consider the following 395-residue polypeptide: Probable eukaryotic translation initiation factor 5 (395 aa).

28 to 35 (GKGNGIKT) is a GTP binding site. Disordered regions lie at residues 146-171 (PPAK…AEDE) and 374-395 (LAEA…DDDE). Basic residues predominate over residues 147 to 157 (PAKKKSHKHKR). Composition is skewed to acidic residues over residues 161 to 170 (VAEEEDGAED) and 377 to 395 (ASDE…DDDE). One can recognise a W2 domain in the interval 228–384 (EEAESSRYDQ…AEASDESESE (157 aa)).

Belongs to the eIF-2-beta/eIF-5 family. As to quaternary structure, monomer.

Catalyzes the hydrolysis of GTP bound to the 40S ribosomal initiation complex (40S.mRNA.Met-tRNA[F].eIF-2.GTP) with the subsequent joining of a 60S ribosomal subunit resulting in the release of eIF-2 and the guanine nucleotide. The subsequent joining of a 60S ribosomal subunit results in the formation of a functional 80S initiation complex (80S.mRNA.Met-tRNA[F]). The polypeptide is Probable eukaryotic translation initiation factor 5 (tif5) (Schizosaccharomyces pombe (strain 972 / ATCC 24843) (Fission yeast)).